Here is a 344-residue protein sequence, read N- to C-terminus: Anthranilate phosphoribosyltransferase (344 aa).

Residues G79, 82-83 (GD), T87, 89-92 (NIST), 107-115 (KHGNRSVSS), and S119 each bind 5-phospho-alpha-D-ribose 1-diphosphate. G79 lines the anthranilate pocket. S91 contacts Mg(2+). Residue N110 participates in anthranilate binding. Residue R165 participates in anthranilate binding. Residues D224 and E225 each contribute to the Mg(2+) site.

It belongs to the anthranilate phosphoribosyltransferase family. In terms of assembly, homodimer. Requires Mg(2+) as cofactor.

The enzyme catalyses N-(5-phospho-beta-D-ribosyl)anthranilate + diphosphate = 5-phospho-alpha-D-ribose 1-diphosphate + anthranilate. Its pathway is amino-acid biosynthesis; L-tryptophan biosynthesis; L-tryptophan from chorismate: step 2/5. Its function is as follows. Catalyzes the transfer of the phosphoribosyl group of 5-phosphorylribose-1-pyrophosphate (PRPP) to anthranilate to yield N-(5'-phosphoribosyl)-anthranilate (PRA). The sequence is that of Anthranilate phosphoribosyltransferase from Salinibacter ruber (strain DSM 13855 / M31).